The sequence spans 78 residues: Large ribosomal subunit protein uL24 (78 aa).

The segment at proline 52–glycine 78 is disordered.

This sequence belongs to the universal ribosomal protein uL24 family. In terms of assembly, part of the 50S ribosomal subunit.

Functionally, one of two assembly initiator proteins, it binds directly to the 5'-end of the 23S rRNA, where it nucleates assembly of the 50S subunit. Its function is as follows. One of the proteins that surrounds the polypeptide exit tunnel on the outside of the subunit. In Campylobacter concisus (strain 13826), this protein is Large ribosomal subunit protein uL24.